Consider the following 267-residue polypeptide: 3-deoxy-manno-octulosonate cytidylyltransferase 2 (267 aa).

This sequence belongs to the KdsB family.

The protein localises to the cytoplasm. The enzyme catalyses 3-deoxy-alpha-D-manno-oct-2-ulosonate + CTP = CMP-3-deoxy-beta-D-manno-octulosonate + diphosphate. Its pathway is nucleotide-sugar biosynthesis; CMP-3-deoxy-D-manno-octulosonate biosynthesis; CMP-3-deoxy-D-manno-octulosonate from 3-deoxy-D-manno-octulosonate and CTP: step 1/1. The protein operates within bacterial outer membrane biogenesis; lipopolysaccharide biosynthesis. Functionally, activates KDO (a required 8-carbon sugar) for incorporation into bacterial lipopolysaccharide in Gram-negative bacteria. This chain is 3-deoxy-manno-octulosonate cytidylyltransferase 2, found in Burkholderia ambifaria (strain MC40-6).